Consider the following 320-residue polypeptide: Reticulocalbin-2 (320 aa).

The first 25 residues, 1–25 (MRLGPRPAALGLLLPLLLYAAVAGA), serve as a signal peptide directing secretion. EF-hand domains lie at 64–99 (EQQR…SFKH) and 100–135 (YAMQ…RVID). Ca(2+) contacts are provided by Asp-77, Asp-79, Asp-81, Glu-88, Asp-113, Asn-115, Asp-117, and Glu-124. Phosphothreonine is present on Thr-140. EF-hand domains are found at residues 150-185 (FRQL…HPEE), 189-224 (MTEF…DPTA), 230-265 (WILV…NNQG), and 266-301 (IAQE…FLTS). Asp-167, Glu-176, Asp-202, Asn-204, Asp-206, Glu-213, Asp-243, Asp-245, Asp-247, Arg-249, Glu-254, Asp-279, Asn-281, Asp-283, Lys-285, and Glu-290 together coordinate Ca(2+). A Prevents secretion from ER motif is present at residues 317 to 320 (HDEL).

The protein belongs to the CREC family.

Its subcellular location is the endoplasmic reticulum lumen. Not known. Binds calcium. This is Reticulocalbin-2 (Rcn2) from Mus musculus (Mouse).